The chain runs to 123 residues: MPTVNQLIRKPRTAPVKRNKVPALQANPQKRGVCTRVYTTTPKKPNSALRKVAKVRLTNGFEVIGYIPGEGHNLQEHSVVMIRGGRVKDLPGVRYHIIRGVLDTQGVKNRKQRRSKYGAKRPK.

At D89 the chain carries 3-methylthioaspartic acid.

The protein belongs to the universal ribosomal protein uS12 family. As to quaternary structure, part of the 30S ribosomal subunit. Contacts proteins S8 and S17. May interact with IF1 in the 30S initiation complex.

With S4 and S5 plays an important role in translational accuracy. Its function is as follows. Interacts with and stabilizes bases of the 16S rRNA that are involved in tRNA selection in the A site and with the mRNA backbone. Located at the interface of the 30S and 50S subunits, it traverses the body of the 30S subunit contacting proteins on the other side and probably holding the rRNA structure together. The combined cluster of proteins S8, S12 and S17 appears to hold together the shoulder and platform of the 30S subunit. The polypeptide is Small ribosomal subunit protein uS12 (Brucella abortus (strain S19)).